The chain runs to 994 residues: ASI1-immunoprecipitated protein 2 (994 aa).

Disordered regions lie at residues Ala-39–Asn-182 and Lys-187–Glu-206. Over residues Lys-45 to Ser-54 the composition is skewed to basic and acidic residues. Residues Ser-60–Asn-102 show a composition bias toward polar residues. Composition is skewed to basic and acidic residues over residues Leu-119–Ala-140 and Lys-148–Asn-163. A PHD-type zinc finger spans residues Val-212–Ala-263. 8 residues coordinate Zn(2+): Cys-215, Cys-218, Cys-230, Cys-233, His-239, Cys-242, Cys-257, and Cys-260. 2 disordered regions span residues Ala-342 to Gly-567 and Cys-839 to Thr-875. Positions Ser-371 to Arg-384 are enriched in low complexity. 2 stretches are compositionally biased toward polar residues: residues Val-417–Asp-435 and Thr-449–Ile-464. Basic and acidic residues-rich tracts occupy residues Ser-469–Ser-478, Pro-536–Val-552, and Asp-858–Thr-875.

In terms of assembly, component of the ASI1-AIPP1-EDM2 (AAE) RNA regulatory complex composed of at least AIPP1/EDM3, ASI1 and EDM2 and may contain CPL2, AIPP2 and AIPP3/BDT1. Part of the BAH-PHD bivalent histone reader complex that contains AIPP2, PAIPP2 and AIPP3/BDT1; the BAH-PHD module associates with CPL2 to form the BAH-PHD-CPL2 complex (BPC) for transcriptional repression. Binds directly to ASI1, AIPP3/BDT1 and CPL2 but not to PAIPP2. As to expression, expressed ubiquitously.

Its function is as follows. Together with AIPP3/BDT1 and PAIPP2, cooperates to form a BAH-PHD bivalent histone reader complex able to read histone H3 lysine 27 trimethylation (H3K27me3) and low-methylated H3K4 histone marks in order to regulate transcription, especially to prevent early flowering; promotes AIPP3/BDT1 binding to H3K27me3. CPL2 is subsequently recruited to form a BAH-PHD-CPL2 complex (BPC) in order to silence several H3K27me3 and low-methylated H3K4 enriched loci, including AGO5, via the phosphorylation state-dependent inhibition of Pol II release from the transcriptional start site (e.g. Ser5P-Pol II dephosphorylation). The BPC complex represses flowering by inhibiting the expression of several genes, including AGL6, FT, FUL and SOC1. Prevents the accumulation of intronic heterochromatin-containing genes (e.g. IBM1, At3g05410 and RPP7). The polypeptide is ASI1-immunoprecipitated protein 2 (Arabidopsis thaliana (Mouse-ear cress)).